The primary structure comprises 544 residues: Membrane protein insertase YidC (544 aa).

Residues 29-58 form a disordered region; sequence TPKADPSATTQTLNPTSSESEDYVPTSSDS. The segment covering 35-46 has biased composition (polar residues); it reads SATTQTLNPTSS. 3 consecutive transmembrane segments (helical) span residues 341–361, 421–441, and 499–519; these read FVLL…IIAI, GGCF…YVFL, and PVIF…YWLV.

It belongs to the OXA1/ALB3/YidC family. Type 1 subfamily. As to quaternary structure, interacts with the Sec translocase complex via SecD. Specifically interacts with transmembrane segments of nascent integral membrane proteins during membrane integration.

It localises to the cell inner membrane. Its function is as follows. Required for the insertion and/or proper folding and/or complex formation of integral membrane proteins into the membrane. Involved in integration of membrane proteins that insert both dependently and independently of the Sec translocase complex, as well as at least some lipoproteins. Aids folding of multispanning membrane proteins. The protein is Membrane protein insertase YidC of Pseudoalteromonas translucida (strain TAC 125).